Consider the following 125-residue polypeptide: Large ribosomal subunit protein bL12 (125 aa).

Belongs to the bacterial ribosomal protein bL12 family. In terms of assembly, homodimer. Part of the ribosomal stalk of the 50S ribosomal subunit. Forms a multimeric L10(L12)X complex, where L10 forms an elongated spine to which 2 to 4 L12 dimers bind in a sequential fashion. Binds GTP-bound translation factors.

Forms part of the ribosomal stalk which helps the ribosome interact with GTP-bound translation factors. Is thus essential for accurate translation. The protein is Large ribosomal subunit protein bL12 of Methylobacterium radiotolerans (strain ATCC 27329 / DSM 1819 / JCM 2831 / NBRC 15690 / NCIMB 10815 / 0-1).